The sequence spans 99 residues: Ribosomal processing cysteine protease Prp (99 aa).

The active-site Proton donor is His16. Cys28 serves as the catalytic Nucleophile.

It belongs to the Prp family. As to quaternary structure, homodimer.

In terms of biological role, an essential cysteine protease that cleaves the N-terminus from ribosomal protein bL27. This chain is Ribosomal processing cysteine protease Prp, found in Mycoplasma genitalium (strain ATCC 33530 / DSM 19775 / NCTC 10195 / G37) (Mycoplasmoides genitalium).